We begin with the raw amino-acid sequence, 765 residues long: Nucleolar transcription factor 1 (765 aa).

M1 is modified (N-acetylmethionine). The tract at residues 1–21 (MNGEADCPTDLEMAAPKGQDR) is disordered. 2 consecutive DNA-binding regions (HMG box) follow at residues 112–180 (PKKP…ARFR) and 196–264 (PEKP…RDYI). T201 carries the phosphothreonine modification. A phosphoserine mark is found at S273, S336, and S364. Positions 298–362 (TKPPPNSYSL…DYEVELLRFL (65 aa)) form a DNA-binding region, HMG box 3. The segment covering 370–379 (QQRVLGEEKM) has biased composition (basic and acidic residues). The interval 370–411 (QQRVLGEEKMLNINKKQTTSPASKKPSQEGGKGGSEKPKRPV) is disordered. S389, S412, S433, S435, S484, S495, S546, S584, and S638 each carry phosphoserine. 3 DNA-binding regions (HMG box) span residues 407 to 475 (PKRP…GGER), 482 to 549 (PESP…SEMR), and 568 to 634 (KKPP…DLWV). Residues 456 to 487 (YKAREAALKAQSERKPGGEREDRGKLPESPKR) form a disordered region. Positions 457–487 (KAREAALKAQSERKPGGEREDRGKLPESPKR) are enriched in basic and acidic residues. The disordered stretch occupies residues 546 to 576 (SEMRAPPAATNSSKKMKFQGEPKKPPMNGYQ). The tract at residues 649 to 765 (ISNKRKNMTK…SGDSSDSGSN (117 aa)) is disordered. The span at 664–674 (PKSSRTTLQSK) shows a compositional bias: polar residues. Positions 677–746 (SEEDDDEEEE…DDDEDEDNES (70 aa)) are enriched in acidic residues. A compositionally biased stretch (low complexity) spans 747–765 (EGSSSSSSSSGDSSDSGSN).

Homodimer. Part of Pol I pre-initiation complex (PIC), in which Pol I core assembles with RRN3 and promoter-bound UTBF and SL1/TIF-IB complex. Interacts with TOP2A in the context of Pol I complex. Interacts with TBP. Interacts with TAF1A. Interacts with RASL11A. Binds to IRS1 and PIK3CA. Interacts with DHX33. Interacts with PHF6. Interacts with CEBPA (isoform 1 and isoform 4). Interacts with DDX11. Interacts with NOP53. Interacts with ALKBH2. Phosphorylated and activated by PIK3CA.

The protein localises to the nucleus. The protein resides in the nucleolus. Its function is as follows. Recognizes the ribosomal RNA gene promoter and activates transcription mediated by RNA polymerase I through cooperative interactions with the transcription factor SL1/TIF-IB complex. It binds specifically to the upstream control element. The sequence is that of Nucleolar transcription factor 1 (Ubtf) from Mus musculus (Mouse).